Reading from the N-terminus, the 88-residue chain is MSSGGLLLLLGLLTLWEVLTPVSSKDRPKFCHLPPKPGPCRAAIPRFYYNPHSKQCEKFIYGGCHGNANSFKTPDECNYTCLGVSLPK.

The first 24 residues, 1–24, serve as a signal peptide directing secretion; it reads MSSGGLLLLLGLLTLWEVLTPVSS. The 51-residue stretch at 31-81 folds into the BPTI/Kunitz inhibitor domain; the sequence is CHLPPKPGPCRAAIPRFYYNPHSKQCEKFIYGGCHGNANSFKTPDECNYTC. 3 disulfides stabilise this stretch: C31-C81, C40-C64, and C56-C77. A propeptide spanning residues 87 to 88 is cleaved from the precursor; the sequence is PK.

The protein belongs to the venom Kunitz-type family. As to quaternary structure, heterotrimer composed of an alpha-neurotoxin-like peptide of 8 kDa (AC P0CJ35), a neurotoxic phospholipase of 16 kDa (AC Q7LZG2) and this serine protease inhibitor of 7 kDa at an approximate stoichiometry of 1:1:4; non-covalently linked. Expressed by the venom gland.

The protein resides in the secreted. Heterotrimer: blocks the voltage-dependent L-type calcium channels (Cav) from the heart, and the small conductance calcium-activated potassium channels (KCa) in the chromaffin cells and in the brain. Is very toxic to mice. Its function is as follows. Monomer: serine protease inhibitor that inhibits plasma kallikrein (Ki=0.057 nM), tissue kallikrein (Ki=0.23 nM), trypsin (Ki=0.31 nM), plasmin (Ki=6.1 nM), elastase (Ki=201 nM), factor Xa (Ki=871 nM), alpha-factor XIIa (Ki=2380 nM). Does not inhibit APC, urokinase-type plasminogen activator (uPA/PLAU), tissue plasminogen activator (tPA/PLAT), thrombin and factor VIIa. In addition, the monomer inhibits fibrinolysis in whole blood and prolonged the intrinsec clotting time. The polypeptide is Kunitz-type serine protease inhibitor taicotoxin (Oxyuranus scutellatus scutellatus (Australian taipan)).